The following is a 665-amino-acid chain: Anaphase-promoting complex subunit 3 (665 aa).

The TPR 1 repeat unit spans residues 115-148 (SCMLDVLGTMYKKAGFLKKATDCFVEAVSINPYN). A DNA-binding region spans residues 191-257 (VPEPSFLKKS…HQSLKLQSQS (67 aa)). TPR repeat units lie at residues 329–362 (LLKL…QQNT), 363–396 (PFVL…SPSR), 431–464 (PESW…DPTF), 466–498 (YAYT…NVRH), 499–532 (YNAW…NPNN), 534–566 (VLIT…DEKS), 568–600 (LARF…APDE), and 601–634 (ANVH…DGKA).

It belongs to the APC3/CDC27 family. In terms of assembly, the APC/C is composed of at least 13 subunits: apc1, apc2, nuc2, apc4, apc5, cut9, apc8, apc10, apc11, hcn1, apc13, apc14 and apc15. Interacts with apc10 and cut9.

It is found in the nucleus. Functionally, component of the anaphase-promoting complex/cyclosome (APC/C), a cell cycle-regulated E3 ubiquitin-protein ligase complex that controls progression through mitosis and the G1 phase of the cell cycle. The APC/C is thought to confer substrate specificity and, in the presence of ubiquitin-conjugating E2 enzymes, it catalyzes the formation of protein-ubiquitin conjugates that are subsequently degraded by the 26S proteasome. Interacts with spindle apparatus, chromosomes, or nuclear envelope, and interconnect nuclear and cytoskeletal functions in mitosis, so the elongation of the spindle in anaphase is blocked. This is Anaphase-promoting complex subunit 3 (nuc2) from Schizosaccharomyces pombe (strain 972 / ATCC 24843) (Fission yeast).